Reading from the N-terminus, the 119-residue chain is Thioredoxin H4 (119 aa).

The region spanning 2–115 is the Thioredoxin domain; that stretch reads AAEEGQVIGC…LQAKIVKHTG (114 aa). Residues Cys40 and Cys43 each act as nucleophile in the active site. A disulfide bridge connects residues Cys40 and Cys43.

It belongs to the thioredoxin family. Plant H-type subfamily. In terms of assembly, interacts with MDH1.

It localises to the cytoplasm. Thiol-disulfide oxidoreductase probably involved in the redox regulation of a number of cytosolic enzymes. Possesses insulin disulfide bonds reducing activity. In Arabidopsis thaliana (Mouse-ear cress), this protein is Thioredoxin H4 (TRX4).